Reading from the N-terminus, the 121-residue chain is Large ribosomal subunit protein uL14c (121 aa).

This sequence belongs to the universal ribosomal protein uL14 family. Part of the 50S ribosomal subunit.

Its subcellular location is the plastid. It is found in the chloroplast. In terms of biological role, binds to 23S rRNA. This is Large ribosomal subunit protein uL14c from Guillardia theta (Cryptophyte).